Consider the following 166-residue polypeptide: HTH-type transcriptional regulator PrsX (166 aa).

Positions 25–159 (EHLLMQLCIR…FEVINKKLLA (135 aa)) constitute an HTH marR-type domain.

The protein resides in the cytoplasm. This Escherichia coli O6:H1 (strain CFT073 / ATCC 700928 / UPEC) protein is HTH-type transcriptional regulator PrsX (prsX).